A 302-amino-acid chain; its full sequence is Bifunctional protein FolD (302 aa).

Residues 168–170, threonine 197, and valine 238 each bind NADP(+); that span reads GRS.

Belongs to the tetrahydrofolate dehydrogenase/cyclohydrolase family. In terms of assembly, homodimer.

The enzyme catalyses (6R)-5,10-methylene-5,6,7,8-tetrahydrofolate + NADP(+) = (6R)-5,10-methenyltetrahydrofolate + NADPH. It carries out the reaction (6R)-5,10-methenyltetrahydrofolate + H2O = (6R)-10-formyltetrahydrofolate + H(+). The protein operates within one-carbon metabolism; tetrahydrofolate interconversion. Functionally, catalyzes the oxidation of 5,10-methylenetetrahydrofolate to 5,10-methenyltetrahydrofolate and then the hydrolysis of 5,10-methenyltetrahydrofolate to 10-formyltetrahydrofolate. The sequence is that of Bifunctional protein FolD from Desulfatibacillum aliphaticivorans.